The sequence spans 111 residues: Ribosome-binding factor A (111 aa).

It belongs to the RbfA family. In terms of assembly, monomer. Binds 30S ribosomal subunits, but not 50S ribosomal subunits or 70S ribosomes.

The protein localises to the cytoplasm. Its function is as follows. One of several proteins that assist in the late maturation steps of the functional core of the 30S ribosomal subunit. Associates with free 30S ribosomal subunits (but not with 30S subunits that are part of 70S ribosomes or polysomes). Required for efficient processing of 16S rRNA. May interact with the 5'-terminal helix region of 16S rRNA. The sequence is that of Ribosome-binding factor A from Helicobacter pylori (strain P12).